Reading from the N-terminus, the 434-residue chain is Methylenetetrahydrofolate--tRNA-(uracil-5-)-methyltransferase TrmFO (434 aa).

9–14 is a binding site for FAD; that stretch reads GAGLAG.

It belongs to the MnmG family. TrmFO subfamily. Requires FAD as cofactor.

The protein resides in the cytoplasm. The catalysed reaction is uridine(54) in tRNA + (6R)-5,10-methylene-5,6,7,8-tetrahydrofolate + NADH + H(+) = 5-methyluridine(54) in tRNA + (6S)-5,6,7,8-tetrahydrofolate + NAD(+). It catalyses the reaction uridine(54) in tRNA + (6R)-5,10-methylene-5,6,7,8-tetrahydrofolate + NADPH + H(+) = 5-methyluridine(54) in tRNA + (6S)-5,6,7,8-tetrahydrofolate + NADP(+). Catalyzes the folate-dependent formation of 5-methyl-uridine at position 54 (M-5-U54) in all tRNAs. The chain is Methylenetetrahydrofolate--tRNA-(uracil-5-)-methyltransferase TrmFO from Bacillus pumilus (strain SAFR-032).